The primary structure comprises 1202 residues: DNA-directed RNA polymerase subunit beta (1202 aa).

The segment covering 1151 to 1162 (LRDMDEEDDDVV) has biased composition (acidic residues). Positions 1151-1202 (LRDMDEEDDDVVNVDALSKYAEKQNEKTNASAEEAKAPSTESAPVETKNNQN) are disordered. The segment covering 1189-1202 (STESAPVETKNNQN) has biased composition (polar residues).

It belongs to the RNA polymerase beta chain family. The RNAP catalytic core consists of 2 alpha, 1 beta, 1 beta' and 1 omega subunit. When a sigma factor is associated with the core the holoenzyme is formed, which can initiate transcription.

The enzyme catalyses RNA(n) + a ribonucleoside 5'-triphosphate = RNA(n+1) + diphosphate. Its function is as follows. DNA-dependent RNA polymerase catalyzes the transcription of DNA into RNA using the four ribonucleoside triphosphates as substrates. The protein is DNA-directed RNA polymerase subunit beta of Pediococcus pentosaceus (strain ATCC 25745 / CCUG 21536 / LMG 10740 / 183-1w).